The following is a 67-amino-acid chain: Large ribosomal subunit protein bL32 (67 aa).

Residues 1 to 20 are compositionally biased toward basic residues; the sequence is MAVPKRKMSRSNTRARRAKW. Residues 1–24 are disordered; sequence MAVPKRKMSRSNTRARRAKWKATA.

It belongs to the bacterial ribosomal protein bL32 family.

This chain is Large ribosomal subunit protein bL32, found in Renibacterium salmoninarum (strain ATCC 33209 / DSM 20767 / JCM 11484 / NBRC 15589 / NCIMB 2235).